The primary structure comprises 372 residues: uncharacterized protein (372 aa).

Positions 1–19 (MKIFFLFIILLGIIQLSNS) are cleaved as a signal peptide. The N-linked (GlcNAc...) asparagine glycan is linked to Asn18. Residues 20–160 (SSCNIDIAGD…IWTTKYSCAI (141 aa)) enclose the MRH domain. Cys22 and Cys58 are oxidised to a cystine. Asn59 is a glycosylation site (N-linked (GlcNAc...) asparagine). An intrachain disulfide couples Cys128 to Cys158. A coiled-coil region spans residues 185–282 (NEILNEAQSN…VQFNDDIKLI (98 aa)). Positions 201–233 (KNEDLNNNNNNNNNNNNNNNNNNNNNNNNNKIN) are disordered. Residues 206 to 230 (NNNNNNNNNNNNNNNNNNNNNNNNN) are compositionally biased toward low complexity.

The protein localises to the secreted. This is an uncharacterized protein from Dictyostelium discoideum (Social amoeba).